The sequence spans 434 residues: Chaperone SurA (434 aa).

The first 20 residues, 1 to 20 (MKNWRTLILGLVICANTAFA), serve as a signal peptide directing secretion. 2 PpiC domains span residues 171-272 (DTEL…KVND) and 282-382 (VTEV…QLVD).

Its subcellular location is the periplasm. The enzyme catalyses [protein]-peptidylproline (omega=180) = [protein]-peptidylproline (omega=0). Its function is as follows. Chaperone involved in the correct folding and assembly of outer membrane proteins. Recognizes specific patterns of aromatic residues and the orientation of their side chains, which are found more frequently in integral outer membrane proteins. May act in both early periplasmic and late outer membrane-associated steps of protein maturation. The polypeptide is Chaperone SurA (Yersinia pestis bv. Antiqua (strain Antiqua)).